Consider the following 30-residue polypeptide: Cyclotide hyen-K (30 aa).

Residues glycine 1 to asparagine 30 constitute a cross-link (cyclopeptide (Gly-Asn)). 3 disulfides stabilise this stretch: cysteine 4/cysteine 20, cysteine 8/cysteine 22, and cysteine 13/cysteine 27.

This is a cyclic peptide. As to expression, detected in seeds (at protein level).

Probably participates in a plant defense mechanism. The protein is Cyclotide hyen-K of Pigea enneasperma (Spade flower).